Here is a 201-residue protein sequence, read N- to C-terminus: Holliday junction branch migration complex subunit RuvA (201 aa).

Residues 1–63 form a domain I region; that stretch reads MISHFSGTVS…EESLTLYGFV (63 aa). The tract at residues 64-142 is domain II; the sequence is EADDRDAFEL…ALAPRGASAS (79 aa). Positions 143-153 are flexible linker; that stretch reads GATHVAAPWRE. The tract at residues 153-201 is domain III; sequence EQVAEGLVGLGWSTKDAEKAVDKVVALKEADPAMSIGNLMRAALRSLAR.

The protein belongs to the RuvA family. In terms of assembly, homotetramer. Forms an RuvA(8)-RuvB(12)-Holliday junction (HJ) complex. HJ DNA is sandwiched between 2 RuvA tetramers; dsDNA enters through RuvA and exits via RuvB. An RuvB hexamer assembles on each DNA strand where it exits the tetramer. Each RuvB hexamer is contacted by two RuvA subunits (via domain III) on 2 adjacent RuvB subunits; this complex drives branch migration. In the full resolvosome a probable DNA-RuvA(4)-RuvB(12)-RuvC(2) complex forms which resolves the HJ.

It localises to the cytoplasm. The RuvA-RuvB-RuvC complex processes Holliday junction (HJ) DNA during genetic recombination and DNA repair, while the RuvA-RuvB complex plays an important role in the rescue of blocked DNA replication forks via replication fork reversal (RFR). RuvA specifically binds to HJ cruciform DNA, conferring on it an open structure. The RuvB hexamer acts as an ATP-dependent pump, pulling dsDNA into and through the RuvAB complex. HJ branch migration allows RuvC to scan DNA until it finds its consensus sequence, where it cleaves and resolves the cruciform DNA. In Cutibacterium acnes (strain DSM 16379 / KPA171202) (Propionibacterium acnes), this protein is Holliday junction branch migration complex subunit RuvA.